Here is a 622-residue protein sequence, read N- to C-terminus: Membrane protein insertase YidC (622 aa).

Residues 8–28 (LFLALILSMGIWMGVNYFFFP) form a helical membrane-spanning segment. The span at 33-61 (KTSETKEVKVDKPSDDKQDQIQKEKKESR) shows a compositional bias: basic and acidic residues. The interval 33 to 70 (KTSETKEVKVDKPSDDKQDQIQKEKKESRTTIPSKGTK) is disordered. 4 helical membrane-spanning segments follow: residues 413–433 (FTIPNYGWSIIIFAILFKLVF), 484–504 (VGGCLPMVIQIPIFIALYTAF), 532–552 (AIPYFTQTGIGLNLLALLMVG), and 571–591 (MLMYVMPVMMLYIFWNMPSGV).

This sequence belongs to the OXA1/ALB3/YidC family. Type 1 subfamily. In terms of assembly, interacts with the Sec translocase complex via SecD. Specifically interacts with transmembrane segments of nascent integral membrane proteins during membrane integration.

The protein resides in the cell inner membrane. Its function is as follows. Required for the insertion and/or proper folding and/or complex formation of integral membrane proteins into the membrane. Involved in integration of membrane proteins that insert both dependently and independently of the Sec translocase complex, as well as at least some lipoproteins. Aids folding of multispanning membrane proteins. The protein is Membrane protein insertase YidC of Leptospira borgpetersenii serovar Hardjo-bovis (strain JB197).